The sequence spans 440 residues: Chromosome partition protein MukF (440 aa).

The leucine-zipper stretch occupies residues 208–236 (LSETSGTLRELQDTLEAAGDKLQANLLRI).

It belongs to the MukF family. As to quaternary structure, interacts, and probably forms a ternary complex, with MukE and MukB via its C-terminal region. The complex formation is stimulated by calcium or magnesium. It is required for an interaction between MukE and MukB.

Its subcellular location is the cytoplasm. The protein localises to the nucleoid. Functionally, involved in chromosome condensation, segregation and cell cycle progression. May participate in facilitating chromosome segregation by condensation DNA from both sides of a centrally located replisome during cell division. Not required for mini-F plasmid partitioning. Probably acts via its interaction with MukB and MukE. Overexpression results in anucleate cells. It has a calcium binding activity. The chain is Chromosome partition protein MukF from Salmonella paratyphi B (strain ATCC BAA-1250 / SPB7).